Consider the following 116-residue polypeptide: MTPLLTLILVVLMGLPLAQALDCHVCAYNGDNCFNPMRCPAMVAYCMTTRTYYTPTRMKVSKSCVPRCFETVYDGYSKHASTTSCCQYDLCNGAGLATPATLALAPILLATLWGLL.

Positions methionine 1 to alanine 20 are cleaved as a signal peptide. Residues leucine 21–alanine 105 form the UPAR/Ly6 domain. 5 disulfides stabilise this stretch: cysteine 23–cysteine 46, cysteine 26–cysteine 33, cysteine 39–cysteine 64, cysteine 68–cysteine 85, and cysteine 86–cysteine 91. The GPI-anchor amidated asparagine moiety is linked to residue asparagine 92. The propeptide at glycine 93 to leucine 116 is removed in mature form.

In terms of assembly, interacts with nAChRs containing alpha-4:beta-2 (CHRNA4:CHRNB2) and alpha-7 (CHRNA7) subunits. Interacts with CHRNA4 probably in the endoplasmic reticulum prior to nAChR pentameric assembly. Interacts with KCNA2/Potassium voltage-gated channel subfamily A member 2.

The protein localises to the cell membrane. The protein resides in the cell projection. It localises to the dendrite. Its subcellular location is the endoplasmic reticulum. Acts in different tissues through interaction to nicotinic acetylcholine receptors (nAChRs). The proposed role as modulator of nAChR activity seems to be dependent on the nAChR subtype and stoichiometry, and to involve an effect on nAChR trafficking and its cell surface expression, and on single channel properties of the nAChR inserted in the plasma membrane. Modulates functional properties of nicotinic acetylcholine receptors (nAChRs) to prevent excessive excitation, and hence neurodegeneration. Enhances desensitization by increasing both the rate and extent of desensitization of alpha-4:beta-2-containing nAChRs and slowing recovery from desensitization. Promotes large amplitude ACh-evoked currents through alpha-4:beta-2 nAChRs. Is involved in regulation of the nAChR pentameric assembly in the endoplasmic reticulum. Shifts stoichiometry from high sensitivity alpha-4(2):beta-2(3) to low sensitivity alpha-4(3):beta-2(2) nAChR. In vitro modulates alpha-3:beta-4-containing nAChRs. Reduces cell surface expression of (alpha-3:beta-4)(2):beta-4 and (alpha-3:beta-4)(2):alpha-5 nAChRs suggesting an interaction with nAChR alpha-3(-):(+)beta-4 subunit interfaces and an allosteric mode. Corresponding single channel effects characterized by decreased unitary conductance, altered burst proportions and enhanced desensitization/inactivation seem to depend on nAChR alpha:alpha subunit interfaces and are greater in (alpha-3:beta-2)(2):alpha-3 when compared to (alpha-3:beta-2)(2):alpha-5 nAChRs. Prevents plasticity in the primary visual cortex late in life. This Pan troglodytes (Chimpanzee) protein is Ly-6/neurotoxin-like protein 1.